Here is a 122-residue protein sequence, read N- to C-terminus: Ribonuclease pancreatic (122 aa).

Over residues Glu1–His16 the composition is skewed to basic and acidic residues. The interval Glu1–Ser20 is disordered. 2 residues coordinate substrate: Lys6 and Arg9. Catalysis depends on His11, which acts as the Proton acceptor. 4 disulfide bridges follow: Cys25-Cys83, Cys39-Cys94, Cys57-Cys109, and Cys64-Cys71. Substrate contacts are provided by residues Lys40–Thr44, Lys65, and Arg84. His117 serves as the catalytic Proton donor.

It belongs to the pancreatic ribonuclease family. Monomer. Interacts with and forms tight 1:1 complexes with RNH1. Dimerization of two such complexes may occur. Interaction with RNH1 inhibits this protein. In terms of processing, not glycosylated although the sequence N-V-T, a recognition site for carbohydrate attachment, is present. In terms of tissue distribution, pancreas.

The protein localises to the secreted. The enzyme catalyses an [RNA] containing cytidine + H2O = an [RNA]-3'-cytidine-3'-phosphate + a 5'-hydroxy-ribonucleotide-3'-[RNA].. The catalysed reaction is an [RNA] containing uridine + H2O = an [RNA]-3'-uridine-3'-phosphate + a 5'-hydroxy-ribonucleotide-3'-[RNA].. In terms of biological role, endonuclease that catalyzes the cleavage of RNA on the 3' side of pyrimidine nucleotides. Acts on single-stranded and double-stranded RNA. This Osphranter rufus (Red kangaroo) protein is Ribonuclease pancreatic (RNASE1).